The sequence spans 243 residues: NAD-dependent protein deacetylase (243 aa).

The Deacetylase sirtuin-type domain occupies 1-243 (MKHDLETLKH…VSVVKSLMTE (243 aa)). Residues Ala-24, Phe-35, Arg-36, Gln-105, Ile-107, Asp-108, and His-123 each coordinate NAD(+). Phe-35 provides a ligand contact to nicotinamide. Nicotinamide contacts are provided by Ile-107 and Asp-108. His-123 (proton acceptor) is an active-site residue. 4 residues coordinate Zn(2+): Cys-131, Cys-134, Cys-151, and Cys-154. Residues Ser-192, Ser-193, Asn-215, and Asp-232 each contribute to the NAD(+) site.

This sequence belongs to the sirtuin family. Class U subfamily. The cofactor is Zn(2+).

It localises to the cytoplasm. It carries out the reaction N(6)-acetyl-L-lysyl-[protein] + NAD(+) + H2O = 2''-O-acetyl-ADP-D-ribose + nicotinamide + L-lysyl-[protein]. Functionally, NAD-dependent protein deacetylase which modulates the activities of several enzymes which are inactive in their acetylated form. The protein is NAD-dependent protein deacetylase of Staphylococcus aureus (strain COL).